The chain runs to 664 residues: Acetylcholinesterase (664 aa).

Residues 1-29 (MFVNQRTRRPYMSVFVLVLGAAVICPAYG) form the signal peptide. Cysteines 95 and 122 form a disulfide. The N-linked (GlcNAc...) asparagine glycan is linked to N117. Catalysis depends on S261, which acts as the Acyl-ester intermediate. C315 and C330 are oxidised to a cystine. Residue N316 is glycosylated (N-linked (GlcNAc...) asparagine). Residues E390 and H504 each act as charge relay system in the active site. A disulfide bridge connects residues C466 and C588. N517 is a glycosylation site (N-linked (GlcNAc...) asparagine). N647 carries GPI-anchor amidated asparagine lipidation. The propeptide at 648-664 (KTPPHPQVILETRAFMH) is removed in mature form.

Belongs to the type-B carboxylesterase/lipase family. As to quaternary structure, homodimer; disulfide-linked.

It localises to the synapse. It is found in the cell membrane. It catalyses the reaction acetylcholine + H2O = choline + acetate + H(+). Rapidly hydrolyzes choline released into the synapse. It can hydrolyze butyrylthiocholine. In Anopheles stephensi (Indo-Pakistan malaria mosquito), this protein is Acetylcholinesterase.